The sequence spans 77 residues: Translation initiation factor IF-1, chloroplastic (77 aa).

Residues 1–71 (MKEQKWIHEG…TRGRIIYRLR (71 aa)) form the S1-like domain.

It belongs to the IF-1 family. As to quaternary structure, component of the 30S ribosomal translation pre-initiation complex which assembles on the 30S ribosome in the order IF-2 and IF-3, IF-1 and N-formylmethionyl-tRNA(fMet); mRNA recruitment can occur at any time during PIC assembly.

It is found in the plastid. It localises to the chloroplast. One of the essential components for the initiation of protein synthesis. Stabilizes the binding of IF-2 and IF-3 on the 30S subunit to which N-formylmethionyl-tRNA(fMet) subsequently binds. Helps modulate mRNA selection, yielding the 30S pre-initiation complex (PIC). Upon addition of the 50S ribosomal subunit IF-1, IF-2 and IF-3 are released leaving the mature 70S translation initiation complex. The polypeptide is Translation initiation factor IF-1, chloroplastic (Montinia caryophyllacea (Wild clove bush)).